Here is a 152-residue protein sequence, read N- to C-terminus: Ribosome maturation factor RimP (152 aa).

The protein belongs to the RimP family.

The protein localises to the cytoplasm. Functionally, required for maturation of 30S ribosomal subunits. This is Ribosome maturation factor RimP from Desulfitobacterium hafniense (strain Y51).